The chain runs to 525 residues: Bestrophin homolog 15 (525 aa).

A run of 4 helical transmembrane segments spans residues 36 to 56 (LFMF…NLII), 71 to 91 (FDQN…VTII), 237 to 257 (LAYP…ALIA), and 273 to 293 (ILYP…VVGW).

The protein belongs to the anion channel-forming bestrophin (TC 1.A.46) family. Calcium-sensitive chloride channel subfamily. As to quaternary structure, forms oligomers.

The protein localises to the cell membrane. In terms of biological role, forms chloride channels. The polypeptide is Bestrophin homolog 15 (best-15) (Caenorhabditis elegans).